A 293-amino-acid polypeptide reads, in one-letter code: Nucleotide-binding protein BcerKBAB4_4948 (293 aa).

14–21 provides a ligand contact to ATP; that stretch reads GMSGAGKT. 65–68 is a GTP binding site; it reads DLRG.

It belongs to the RapZ-like family.

Its function is as follows. Displays ATPase and GTPase activities. This is Nucleotide-binding protein BcerKBAB4_4948 from Bacillus mycoides (strain KBAB4) (Bacillus weihenstephanensis).